Here is a 483-residue protein sequence, read N- to C-terminus: 6-phosphogluconate dehydrogenase, decarboxylating 1 (483 aa).

NADP(+) is bound by residues 11 to 16 (GLAVMG), 34 to 36 (NRT), 78 to 80 (VKA), and Asn-106. Substrate is bound by residues Asn-106 and 132 to 134 (SGG). Lys-186 functions as the Proton acceptor in the catalytic mechanism. 189-190 (HN) contributes to the substrate binding site. Glu-193 serves as the catalytic Proton donor. Residues Tyr-194, Lys-264, Arg-291, Arg-454, and His-460 each coordinate substrate.

Belongs to the 6-phosphogluconate dehydrogenase family. Homodimer.

The protein resides in the cytoplasm. The enzyme catalyses 6-phospho-D-gluconate + NADP(+) = D-ribulose 5-phosphate + CO2 + NADPH. It functions in the pathway carbohydrate degradation; pentose phosphate pathway; D-ribulose 5-phosphate from D-glucose 6-phosphate (oxidative stage): step 3/3. In terms of biological role, catalyzes the oxidative decarboxylation of 6-phosphogluconate to ribulose 5-phosphate and CO(2), with concomitant reduction of NADP to NADPH. The sequence is that of 6-phosphogluconate dehydrogenase, decarboxylating 1 (pgdC) from Spinacia oleracea (Spinach).